Reading from the N-terminus, the 244-residue chain is HTH-type transcriptional regulator Cmr (244 aa).

A nucleoside 3',5'-cyclic phosphate is bound at residue 41-160 (GSAPLHRDDV…RRWLSSVAQR (120 aa)). Residues 174 to 237 (RPLPAQVAQL…YAVIEITDQH (64 aa)) enclose the HTH crp-type domain. Positions 197–216 (QRTLAAMLGAQRPSINKILK) form a DNA-binding region, H-T-H motif.

Positively regulates the expression of at least groEL2. The chain is HTH-type transcriptional regulator Cmr (cmr) from Mycobacterium tuberculosis (strain CDC 1551 / Oshkosh).